The primary structure comprises 217 residues: MRLILLGPPGAGKGTQANFIKEKFGIPQISTGDMLRAAVKAGTPLGVEAKKVMDAGGLVSDDIIIGLVKDRLKEDDCKSGYMFDGFPRTIPQADAMKEAGVPIDFVLEIDVPDSEIIERMSGRRAHLASGRTYHVKYNPPKVAGKDDLTGEDLVQRDDDREETVAKRLEVYHSQTKPLVEYYSKWAASGEPGTPKVRKISGLGAVDEITSRAFAALK.

10-15 (GAGKGT) is an ATP binding site. Positions 30-59 (STGDMLRAAVKAGTPLGVEAKKVMDAGGLV) are NMP. Residues Thr-31, Arg-36, 57–59 (GLV), 85–88 (GFPR), and Gln-92 contribute to the AMP site. Positions 122–159 (GRRAHLASGRTYHVKYNPPKVAGKDDLTGEDLVQRDDD) are LID. ATP-binding positions include Arg-123 and 132-133 (TY). 2 residues coordinate AMP: Arg-156 and Arg-167. Gly-203 serves as a coordination point for ATP.

This sequence belongs to the adenylate kinase family. Monomer.

Its subcellular location is the cytoplasm. It carries out the reaction AMP + ATP = 2 ADP. The protein operates within purine metabolism; AMP biosynthesis via salvage pathway; AMP from ADP: step 1/1. Functionally, catalyzes the reversible transfer of the terminal phosphate group between ATP and AMP. Plays an important role in cellular energy homeostasis and in adenine nucleotide metabolism. In Aromatoleum aromaticum (strain DSM 19018 / LMG 30748 / EbN1) (Azoarcus sp. (strain EbN1)), this protein is Adenylate kinase.